The sequence spans 640 residues: MALSRGLPRELAEAVAGGRVLVVGAGGIGCELLKNLVLTGFSHIDLIDLDTIDVSNLNRQFLFQKKHVGRSKAQVAKESVLQFYPKANIVAYHDSIMNPDYNVEFFRQFILVMNALDNRAARNHVNRMCLAADVPLIESGTAGYLGQVTTIKKGVTECYECHPKPTQRTFPGCTIRNTPSEPIHCIVWAKYLFNQLFGEEDADQEVSPDRADPEAAWEPTEAEARARASNEDGDIKRISTKEWAKSTGYDPVKLFTKLFKDDIRYLLTMDKLWRKRKPPVPLDWAEVQSQGEETNASDQQNEPQLGLKDQQVLDVKSYARLFSKSIETLRVHLAEKGDGAELIWDKDDPSAMDFVTSAANLRMHIFSMNMKSRFDIKSMAGNIIPAIATTNAVIAGLIVLEGLKILSGKIDQCRTIFLNKQPNPRKKLLVPCALDPPNPNCYVCASKPEVTVRLNVHKVTVLTLQDKIVKEKFAMVAPDVQIEDGKGTILISSEEGETEANNHKKLSEFGIRNGSRLQADDFLQDYTLLINILHSEDLGKDVEFEVVGDAPEKVGPKQAEDAAKSITNGSDDGAQPSTSTAQEQDDVLIVDSDEEDSSNNADVSEEERSRKRKLDEKENLSAKRSRIEQKEELDDVIALD.

Residues 24 to 29 (GAGGIG), D48, 56 to 59 (NLNR), K72, 95 to 96 (SI), and 117 to 122 (DNRAAR) contribute to the ATP site. Zn(2+)-binding residues include C158 and C161. K164 is covalently cross-linked (Glycyl lysine isopeptide (Lys-Gly) (interchain with G-Cter in SUMO1)). The Glycyl thioester intermediate role is filled by C173. K190 participates in a covalent cross-link: Glycyl lysine isopeptide (Lys-Gly) (interchain with G-Cter in SUMO). The tract at residues 202-231 (ADQEVSPDRADPEAAWEPTEAEARARASNE) is disordered. S207 carries the phosphoserine modification. The span at 222-231 (AEARARASNE) shows a compositional bias: basic and acidic residues. Residue K236 forms a Glycyl lysine isopeptide (Lys-Gly) (interchain with G-Cter in SUMO1); alternate linkage. Residues K236 and K257 each participate in a glycyl lysine isopeptide (Lys-Gly) (interchain with G-Cter in SUMO2); alternate cross-link. Residues K257 and K271 each participate in a glycyl lysine isopeptide (Lys-Gly) (interchain with G-Cter in SUMO); alternate cross-link. At K271 the chain carries N6-acetyllysine; alternate. K275 participates in a covalent cross-link: Glycyl lysine isopeptide (Lys-Gly) (interchain with G-Cter in SUMO). Residue K371 forms a Glycyl lysine isopeptide (Lys-Gly) (interchain with G-Cter in SUMO2) linkage. Residue K420 forms a Glycyl lysine isopeptide (Lys-Gly) (interchain with G-Cter in SUMO1); alternate linkage. Residue K420 forms a Glycyl lysine isopeptide (Lys-Gly) (interchain with G-Cter in SUMO2); alternate linkage. C441 and C444 together coordinate Zn(2+). Residue S507 is modified to Phosphoserine. Residue K540 forms a Glycyl lysine isopeptide (Lys-Gly) (interchain with G-Cter in SUMO2) linkage. The segment covering 551–563 (PEKVGPKQAEDAA) has biased composition (basic and acidic residues). The segment at 551 to 640 (PEKVGPKQAE…EELDDVIALD (90 aa)) is disordered. A compositionally biased stretch (polar residues) spans 565–582 (SITNGSDDGAQPSTSTAQ). The segment covering 583-597 (EQDDVLIVDSDEEDS) has biased composition (acidic residues). The residue at position 592 (S592) is a Phosphoserine. Residues 606-630 (EERSRKRKLDEKENLSAKRSRIEQK) are compositionally biased toward basic and acidic residues. K611 is covalently cross-linked (Glycyl lysine isopeptide (Lys-Gly) (interchain with G-Cter in SUMO)). Residue K613 forms a Glycyl lysine isopeptide (Lys-Gly) (interchain with G-Cter in SUMO); alternate linkage. N6-acetyllysine; alternate is present on K613. Glycyl lysine isopeptide (Lys-Gly) (interchain with G-Cter in SUMO) cross-links involve residues K617 and K623. Over residues 631–640 (EELDDVIALD) the composition is skewed to acidic residues.

It belongs to the ubiquitin-activating E1 family. In terms of assembly, heterodimer of SAE1 and UBA2/SAE2. The heterodimer corresponds to the two domains that are encoded on a single polypeptide chain in ubiquitin-activating enzyme E1. Interacts with UBE2I. Sumoylated with SUMO1 and SUMO2/3 and by UBC9. Sumoylation at Lys-236 inhibits enzymatic activity. Sumoylation at the C-terminal lysine cluster plays an essential role in nuclear trafficking.

The protein localises to the cytoplasm. It is found in the nucleus. It functions in the pathway protein modification; protein sumoylation. Functionally, the heterodimer acts as an E1 ligase for SUMO1, SUMO2, SUMO3, and probably SUMO4. It mediates ATP-dependent activation of SUMO proteins followed by formation of a thioester bond between a SUMO protein and a conserved active site cysteine residue on UBA2/SAE2. This chain is SUMO-activating enzyme subunit 2 (UBA2), found in Homo sapiens (Human).